The sequence spans 113 residues: UPF0145 protein SynWH7803_1684 (113 aa).

The protein belongs to the UPF0145 family.

The protein is UPF0145 protein SynWH7803_1684 of Synechococcus sp. (strain WH7803).